A 689-amino-acid polypeptide reads, in one-letter code: Transketolase (689 aa).

Position 56 (histidine 56) interacts with substrate. Residues histidine 96 and 144–146 each bind thiamine diphosphate; that span reads GNL. Mg(2+) is bound at residue aspartate 185. Residues glycine 186 and asparagine 215 each contribute to the thiamine diphosphate site. Residues asparagine 215 and isoleucine 217 each contribute to the Mg(2+) site. Positions 289, 380, and 407 each coordinate substrate. Position 289 (histidine 289) interacts with thiamine diphosphate. Catalysis depends on glutamate 434, which acts as the Proton donor. Phenylalanine 460 lines the thiamine diphosphate pocket. Substrate contacts are provided by histidine 484, aspartate 492, and arginine 543.

The protein belongs to the transketolase family. In terms of assembly, homodimer. Mg(2+) serves as cofactor. Ca(2+) is required as a cofactor. Requires Mn(2+) as cofactor. The cofactor is Co(2+). It depends on thiamine diphosphate as a cofactor.

It carries out the reaction D-sedoheptulose 7-phosphate + D-glyceraldehyde 3-phosphate = aldehydo-D-ribose 5-phosphate + D-xylulose 5-phosphate. Catalyzes the transfer of a two-carbon ketol group from a ketose donor to an aldose acceptor, via a covalent intermediate with the cofactor thiamine pyrophosphate. The protein is Transketolase (tkt) of Aquifex aeolicus (strain VF5).